Reading from the N-terminus, the 344-residue chain is Arginine N-succinyltransferase (344 aa).

Leu125 serves as a coordination point for succinyl-CoA. Residue His229 is the Proton donor of the active site.

It belongs to the arginine N-succinyltransferase family.

The enzyme catalyses succinyl-CoA + L-arginine = N(2)-succinyl-L-arginine + CoA + H(+). It participates in amino-acid degradation; L-arginine degradation via AST pathway; L-glutamate and succinate from L-arginine: step 1/5. Catalyzes the transfer of succinyl-CoA to arginine to produce N(2)-succinylarginine. In Enterobacter sp. (strain 638), this protein is Arginine N-succinyltransferase.